Consider the following 409-residue polypeptide: Multifunctional CCA protein (409 aa).

Positions 8 and 11 each coordinate ATP. Residues Gly8 and Arg11 each contribute to the CTP site. The Mg(2+) site is built by Asp21 and Asp23. The ATP site is built by Arg91, Arg137, and Arg140. Arg91, Arg137, and Arg140 together coordinate CTP. The HD domain maps to 228–329 (SGLHTLSVLE…LELLQSFDVY (102 aa)).

Belongs to the tRNA nucleotidyltransferase/poly(A) polymerase family. Bacterial CCA-adding enzyme type 1 subfamily. Monomer. Can also form homodimers and oligomers. Requires Mg(2+) as cofactor. It depends on Ni(2+) as a cofactor.

It catalyses the reaction a tRNA precursor + 2 CTP + ATP = a tRNA with a 3' CCA end + 3 diphosphate. The catalysed reaction is a tRNA with a 3' CCA end + 2 CTP + ATP = a tRNA with a 3' CCACCA end + 3 diphosphate. Catalyzes the addition and repair of the essential 3'-terminal CCA sequence in tRNAs without using a nucleic acid template. Adds these three nucleotides in the order of C, C, and A to the tRNA nucleotide-73, using CTP and ATP as substrates and producing inorganic pyrophosphate. tRNA 3'-terminal CCA addition is required both for tRNA processing and repair. Also involved in tRNA surveillance by mediating tandem CCA addition to generate a CCACCA at the 3' terminus of unstable tRNAs. While stable tRNAs receive only 3'-terminal CCA, unstable tRNAs are marked with CCACCA and rapidly degraded. The sequence is that of Multifunctional CCA protein from Pseudomonas fluorescens (strain Pf0-1).